The sequence spans 668 residues: Golgin candidate 2 (668 aa).

Residues 22–317 (QAADSLRKDE…RQREERRRRR (296 aa)) are disordered. Residues 26-39 (SLRKDEKSETHDEV) are compositionally biased toward basic and acidic residues. Composition is skewed to polar residues over residues 64–86 (GSDSGSGSQRNSTEQKPSYLSSS) and 100–113 (SAPSQSLTQDNTKL). Low complexity-rich tracts occupy residues 123-141 (STPNQRTSTSTSRSPGGTS) and 168-178 (SSSSNVVNSRG). Basic and acidic residues-rich tracts occupy residues 184–207 (TNKEPSDKEVSSPSDADMKNRNAP), 215–237 (THKESEKDVSGKTPPLDDSRRSA), and 250–259 (GKRDGRESRR). Acidic residues predominate over residues 290–302 (DESESDYESDSST). Basic and acidic residues predominate over residues 303 to 312 (DSERERQREE). Positions 331–539 (AVIKERENMV…SQVEALSSEK (209 aa)) form a coiled coil. 2 helical membrane-spanning segments follow: residues 594 to 614 (KHLGWLVMQLNAIFISGTVFL) and 622 to 642 (IWAVVYLVCLHLWVLYILLSH).

Its subcellular location is the golgi apparatus membrane. Functionally, golgi matrix protein playing a role in tethering of vesicles to Golgi membranes and in maintaining the overall structure of the Golgi apparatus. The protein is Golgin candidate 2 (GC2) of Arabidopsis thaliana (Mouse-ear cress).